Here is a 304-residue protein sequence, read N- to C-terminus: Xylanase inhibitor protein 1 (304 aa).

An N-terminal signal peptide occupies residues 1-30 (MAPLAARRPACLLALLSVAAALFLTPTALA). In terms of domain architecture, GH18 spans 36–304 (GQVTVFWGRN…NYSSLIKYYA (269 aa)). An intrachain disulfide couples C55 to C96. N119 carries an N-linked (GlcNAc...) asparagine glycan. E158 functions as the Proton donor in the catalytic mechanism. Positions 178–184 (IRGGPGK) are interaction with fungal GH11 xylanase. Cysteines 194 and 225 form a disulfide. Residues 262 to 275 (HPKNVYYGVAPVAQ) are interaction with fungal GH10 xylanase. N295 carries an N-linked (GlcNAc...) asparagine glycan.

This sequence belongs to the glycosyl hydrolase 18 family. Xylanase inhibitor subfamily. In terms of assembly, binds to fungal GH10 and GH11 xylanases. Also forms a ternary complex with barley alpha-amylase 1 (AMY1) and insoluble starch.

The protein resides in the secreted. Functionally, fungal xylanase inhibitor. Possesses competitive inhibiting activity against fungal endo-1,4-beta-D-xylanases belonging to glycoside hydrolase family 10 (GH10) and family 11 (GH11). Possesses also inhibitory activity towards barley alpha-amylases. Binding to xylanases or amylases is necessary for inhibition activity. May function in plant defense against secreted fungal pathogen xylanases. Is similar to class III chitinases, but does not exhibit chitinase activity. The chain is Xylanase inhibitor protein 1 from Triticum aestivum (Wheat).